The chain runs to 1070 residues: MPKRDDIKTILVIGSGPIVIGQAAEFDYAGTQACLSLKEEGYRVVLVNSNPATIMTDAEMADKVYIEPITLDFVSRIIRKERPDAILPTLGGQTGLNMAMELSAAGILDECNVEVLGTDLTAIKKAEDREAFRDLMNELGEPVPESDIIHNLDEAYTFVERIGYPVIVRPAYTLGGSGGGICHNEQELIETVTSGLKLSPVTQCLLEKSIAGFKEVEYEVMRDANNNAMVVCNMENIDPVGIHTGDSIVVAPSQTLSDREYQLLRDVSLKIIRALEIEGGCNVQLALDPDSYNYYVIEVNPRVSRSSALASKATGYPIAKLAAKIAVGLTLDEVRNPVTGTTFAHFEPTLDYVVAKIPRFAFDKFEQADRRLGTQMKATGEVMAIGRSWEEALLKAVRSLEIGADHLLLEEAENADEATLERKICFPEDDRLFFLAAALRRGQTIEQLHAKTKIDLFFLYKLSKTIELENRIKENPQNQEILAEAKRAGFSDAFLATCWNVDEQAIYDLRKAQNLFPVYKMVDTCAAEFESTTPYFYSTYEEENESTRSAKESVIVLGSGPIRIGQGVEFDYATVHSVWAIQQAGYEAIIINNNPETVSTDFSISDKLYFEPLTLEDVMHVIEIEQPLGVVVQFGGQTAINLADGLAKRGVKILGTSLEDTDRAENRDAFEKALGILQIPQPAGKTATSVEEAINVATDIGYPVLVRPSYVLGGRAMEIVESEEALKHYMTNAVKVNPKHPVLVDRYVSGQEVEVDAISDGENVLIPGIMEHIERAGVHSGDSIAVYPAQRLSSQVKNTIVDYTTRLATGLNIIGMLNIQYVVDGEEVFVIEVNPRSSRTAPFLSKITEIPMANVATRVILGENLIDLGYTPGLAPEKQEIFVKVPVFSFAKLRSVDTSLGPEMKSTGEVMGKDVTLEKALYKGFVASGTTMHDYGTVLLTVADRDKEEAVELAKRFNRIGFTIMATKGTASTLEEADIPVSQVKKIGENQETLIDYIRNGQVTLVVNTLTTGKRPERDGFQIRRESVENGIPVCTSLDTAEAILRVLESRSFELESMNTSEVKQPKARV.

The segment at 1 to 401 (MPKRDDIKTI…ALLKAVRSLE (401 aa)) is carboxyphosphate synthetic domain. Residues Arg129, Arg169, Gly175, Gly176, Lys208, Ile210, Glu215, Gly241, Ile242, His243, Gln284, and Glu298 each coordinate ATP. The region spanning 133-327 (RDLMNELGEP…IAKLAAKIAV (195 aa)) is the ATP-grasp 1 domain. Positions 284, 298, and 300 each coordinate Mg(2+). Residues Gln284, Glu298, and Asn300 each contribute to the Mn(2+) site. The tract at residues 402–546 (IGADHLLLEE…YSTYEEENES (145 aa)) is oligomerization domain. The segment at 547–929 (TRSAKESVIV…ALYKGFVASG (383 aa)) is carbamoyl phosphate synthetic domain. One can recognise an ATP-grasp 2 domain in the interval 671–861 (EKALGILQIP…MANVATRVIL (191 aa)). Residues Arg707, Arg746, Val748, Glu752, Gly777, Val778, His779, Ser780, Gln820, and Glu832 each coordinate ATP. Residues Gln820, Glu832, and Asn834 each contribute to the Mg(2+) site. Mn(2+)-binding residues include Gln820, Glu832, and Asn834. In terms of domain architecture, MGS-like spans 930–1070 (TTMHDYGTVL…SEVKQPKARV (141 aa)). The interval 930–1070 (TTMHDYGTVL…SEVKQPKARV (141 aa)) is allosteric domain.

It belongs to the CarB family. As to quaternary structure, composed of two chains; the small (or glutamine) chain promotes the hydrolysis of glutamine to ammonia, which is used by the large (or ammonia) chain to synthesize carbamoyl phosphate. Tetramer of heterodimers (alpha,beta)4. It depends on Mg(2+) as a cofactor. Mn(2+) serves as cofactor.

The catalysed reaction is hydrogencarbonate + L-glutamine + 2 ATP + H2O = carbamoyl phosphate + L-glutamate + 2 ADP + phosphate + 2 H(+). It catalyses the reaction hydrogencarbonate + NH4(+) + 2 ATP = carbamoyl phosphate + 2 ADP + phosphate + 2 H(+). Its pathway is amino-acid biosynthesis; L-arginine biosynthesis; carbamoyl phosphate from bicarbonate: step 1/1. It functions in the pathway pyrimidine metabolism; UMP biosynthesis via de novo pathway; (S)-dihydroorotate from bicarbonate: step 1/3. Functionally, large subunit of the glutamine-dependent carbamoyl phosphate synthetase (CPSase). CPSase catalyzes the formation of carbamoyl phosphate from the ammonia moiety of glutamine, carbonate, and phosphate donated by ATP, constituting the first step of 2 biosynthetic pathways, one leading to arginine and/or urea and the other to pyrimidine nucleotides. The large subunit (synthetase) binds the substrates ammonia (free or transferred from glutamine from the small subunit), hydrogencarbonate and ATP and carries out an ATP-coupled ligase reaction, activating hydrogencarbonate by forming carboxy phosphate which reacts with ammonia to form carbamoyl phosphate. The protein is Carbamoyl phosphate synthase large chain of Listeria monocytogenes serotype 4b (strain CLIP80459).